The chain runs to 158 residues: Large ribosomal subunit protein uL16 (158 aa).

Belongs to the universal ribosomal protein uL16 family. Part of the 50S ribosomal subunit.

Binds 23S rRNA and is also seen to make contacts with the A and possibly P site tRNAs. In Parasynechococcus marenigrum (strain WH8102), this protein is Large ribosomal subunit protein uL16.